Consider the following 317-residue polypeptide: Apolipoprotein E (317 aa).

A signal peptide spans 1–18 (MKVLWAALLVTFLAGCQA). 8 tandem repeats follow at residues 80 to 101 (TLMD…EQLS), 102 to 123 (PVAE…ARLG), 124 to 145 (ADME…AMLG), 146 to 167 (QSTE…KRLL), 168 to 189 (RDAD…EGAE), 190 to 211 (RGVS…VRAA), 212 to 233 (TVGS…ERLR), and 234 to 255 (ARME…EQVA). Residues 80-255 (TLMDETMKEL…RLDEVKEQVA (176 aa)) form an 8 X 22 AA approximate tandem repeats region. Methionine 143 carries the post-translational modification Methionine sulfoxide. Residue serine 147 is modified to Phosphoserine. Residues 158-168 (HLRKLRKRLLR) are LDL and other lipoprotein receptors binding. 162-165 (LRKR) contacts heparin. Residues 210 to 290 (AATVGSLAGQ…SWFEPLVEDM (81 aa)) form a lipid-binding and lipoprotein association region. 229-236 (GERLRARM) provides a ligand contact to heparin. The interval 266-317 (QQISLQAEAFQARLKSWFEPLVEDMQRQWAGLVEKVQAAVGASTAPVPSDNH) is homooligomerization. The tract at residues 278–290 (RLKSWFEPLVEDM) is specificity for association with VLDL.

It belongs to the apolipoprotein A1/A4/E family. As to quaternary structure, homotetramer. May interact with ABCA1; functionally associated with ABCA1 in the biogenesis of HDLs. May interact with APP/A4 amyloid-beta peptide; the interaction is extremely stable in vitro but its physiological significance is unclear. May interact with MAPT. May interact with MAP2. In the cerebrospinal fluid, interacts with secreted SORL1. Interacts with PMEL; this allows the loading of PMEL luminal fragment on ILVs to induce fibril nucleation. In terms of processing, APOE exists as multiple glycosylated and sialylated glycoforms within cells and in plasma. The extent of glycosylation and sialylation are tissue and context specific. Post-translationally, glycated in plasma VLDL. Phosphorylated by FAM20C in the extracellular medium.

The protein localises to the secreted. Its subcellular location is the extracellular space. The protein resides in the extracellular matrix. It is found in the extracellular vesicle. It localises to the endosome. The protein localises to the multivesicular body. Functionally, APOE is an apolipoprotein, a protein associating with lipid particles, that mainly functions in lipoprotein-mediated lipid transport between organs via the plasma and interstitial fluids. APOE is a core component of plasma lipoproteins and is involved in their production, conversion and clearance. Apolipoproteins are amphipathic molecules that interact both with lipids of the lipoprotein particle core and the aqueous environment of the plasma. As such, APOE associates with chylomicrons, chylomicron remnants, very low density lipoproteins (VLDL) and intermediate density lipoproteins (IDL) but shows a preferential binding to high-density lipoproteins (HDL). It also binds a wide range of cellular receptors including the LDL receptor/LDLR, the LDL receptor-related proteins LRP1, LRP2 and LRP8 and the very low-density lipoprotein receptor/VLDLR that mediate the cellular uptake of the APOE-containing lipoprotein particles. Finally, APOE also has a heparin-binding activity and binds heparan-sulfate proteoglycans on the surface of cells, a property that supports the capture and the receptor-mediated uptake of APOE-containing lipoproteins by cells. A main function of APOE is to mediate lipoprotein clearance through the uptake of chylomicrons, VLDLs, and HDLs by hepatocytes. APOE is also involved in the biosynthesis by the liver of VLDLs as well as their uptake by peripheral tissues ensuring the delivery of triglycerides and energy storage in muscle, heart and adipose tissues. By participating in the lipoprotein-mediated distribution of lipids among tissues, APOE plays a critical role in plasma and tissues lipid homeostasis. APOE is also involved in two steps of reverse cholesterol transport, the HDLs-mediated transport of cholesterol from peripheral tissues to the liver, and thereby plays an important role in cholesterol homeostasis. First, it is functionally associated with ABCA1 in the biogenesis of HDLs in tissues. Second, it is enriched in circulating HDLs and mediates their uptake by hepatocytes. APOE also plays an important role in lipid transport in the central nervous system, regulating neuron survival and sprouting. The chain is Apolipoprotein E (APOE) from Colobus guereza (Mantled guereza).